Here is a 129-residue protein sequence, read N- to C-terminus: Small ribosomal subunit protein uS11 (129 aa).

The protein belongs to the universal ribosomal protein uS11 family. In terms of assembly, part of the 30S ribosomal subunit. Interacts with proteins S7 and S18. Binds to IF-3.

In terms of biological role, located on the platform of the 30S subunit, it bridges several disparate RNA helices of the 16S rRNA. Forms part of the Shine-Dalgarno cleft in the 70S ribosome. The protein is Small ribosomal subunit protein uS11 of Sinorhizobium medicae (strain WSM419) (Ensifer medicae).